Here is a 112-residue protein sequence, read N- to C-terminus: Prothymosin alpha (112 aa).

Position 1 is an N-acetylmethionine (Met-1). The segment at 1-112 (MSDAAVDTSS…KKQKKTDEDD (112 aa)) is disordered. Ser-2 is subject to N-acetylserine; in Prothymosin alpha, N-terminally processed. Phosphoserine is present on Ser-2. Thr-8 is modified (phosphothreonine). A phosphoserine mark is found at Ser-9 and Ser-10. Residues Thr-13 and Thr-14 each carry the phosphothreonine modification. Positions 13–31 (TTKDLKEKKEVVEEAENGR) are enriched in basic and acidic residues. Residue Lys-15 is modified to N6-acetyllysine; alternate. Lys-15 bears the N6-succinyllysine; alternate mark. A compositionally biased stretch (acidic residues) spans 43 to 84 (ENGEQEADNEVDEEEEEGGEEEEEEEEGDGEEEDGDEDEEAE). Over residues 101 to 112 (ETKKQKKTDEDD) the composition is skewed to basic and acidic residues. Thr-102 carries the post-translational modification Phosphothreonine. N6-acetyllysine; alternate is present on Lys-103. Residue Lys-103 forms a Glycyl lysine isopeptide (Lys-Gly) (interchain with G-Cter in SUMO2); alternate linkage. Thr-108 carries the phosphothreonine modification.

The protein belongs to the pro/parathymosin family. As to quaternary structure, interacts with NUPR1; regulates apoptotic process. Post-translationally, covalently linked to a small RNA of about 20 nucleotides.

It localises to the nucleus. Functionally, prothymosin alpha may mediate immune function by conferring resistance to certain opportunistic infections. The sequence is that of Prothymosin alpha (Ptma) from Rattus norvegicus (Rat).